We begin with the raw amino-acid sequence, 76 residues long: Acyl carrier protein (76 aa).

The Carrier domain occupies 1–76 (MSIEERVKKI…SAIDYVQNNQ (76 aa)). Residue Ser-36 is modified to O-(pantetheine 4'-phosphoryl)serine.

The protein belongs to the acyl carrier protein (ACP) family. In terms of processing, 4'-phosphopantetheine is transferred from CoA to a specific serine of apo-ACP by AcpS. This modification is essential for activity because fatty acids are bound in thioester linkage to the sulfhydryl of the prosthetic group.

The protein localises to the cytoplasm. It participates in lipid metabolism; fatty acid biosynthesis. Carrier of the growing fatty acid chain in fatty acid biosynthesis. The sequence is that of Acyl carrier protein from Mannheimia succiniciproducens (strain KCTC 0769BP / MBEL55E).